Here is a 212-residue protein sequence, read N- to C-terminus: Tetraspanin-31-A (212 aa).

The Cytoplasmic portion of the chain corresponds to Met1–Ala12. A helical membrane pass occupies residues Leu13–Trp33. Residues Gly34–His44 lie on the Extracellular side of the membrane. The helical transmembrane segment at Ile45–Ile65 threads the bilayer. Topologically, residues Gly66 to Gln72 are cytoplasmic. A helical membrane pass occupies residues Val73–Ser93. Residues Cys94 to Lys175 lie on the Extracellular side of the membrane. Asn100, Asn109, Asn117, and Asn134 each carry an N-linked (GlcNAc...) asparagine glycan. A helical membrane pass occupies residues Ile176–Phe196. The Cytoplasmic portion of the chain corresponds to Arg197 to Leu212.

It belongs to the tetraspanin (TM4SF) family.

It localises to the membrane. The chain is Tetraspanin-31-A (tspan31-a) from Xenopus laevis (African clawed frog).